Reading from the N-terminus, the 104-residue chain is Putative protein 22K (104 aa).

The tract at residues Tyr35–Lys104 is disordered. Positions Pro60–Glu78 are enriched in acidic residues. Positions Ser94–Lys104 are enriched in low complexity.

The protein is Putative protein 22K of Snake adenovirus serotype 1 (SnAdV-1).